The sequence spans 192 residues: uncharacterized protein (192 aa).

This is an uncharacterized protein from Magallana gigas (Pacific oyster).